A 498-amino-acid chain; its full sequence is WD repeat-containing protein 55 homolog (498 aa).

The segment at 1–131 is disordered; it reads MHTHNNFKTP…ATFDLDEDDE (131 aa). 2 stretches are compositionally biased toward acidic residues: residues 12 to 23 and 31 to 48; these read DEDELDDLDEDM and IEQE…EYDL. 2 stretches are compositionally biased toward low complexity: residues 67 to 82 and 93 to 103; these read NDSS…NAAD and AGGVTAGGATS. 6 WD repeats span residues 154-193, 198-237, 241-279, 282-321, 324-363, and 408-447; these read KLED…NKLL, VHSK…LKKL, AHDD…AIFE, ELED…MYVQ, PYEE…YHCD, and QHNM…DFGD. Residues 478–498 are disordered; the sequence is DLTKENADGDDDPGAGPSNMA.

This sequence belongs to the WD repeat WDR55 family.

The protein is WD repeat-containing protein 55 homolog of Drosophila melanogaster (Fruit fly).